The following is a 240-amino-acid chain: Aquaporin Z (240 aa).

A run of 2 helical transmembrane segments spans residues 10–30 (MIGT…AAGF) and 35–55 (IGLV…AYAI). Residues 64–66 (NPA) carry the NPA 1 motif. 3 helical membrane passes run 90–110 (VLGA…AAGF), 131–151 (LVAC…VIMG), and 160–180 (GFAP…SIPV). The NPA 2 signature appears at 186–188 (NPA). Residues 202–222 (IGQLWLFWVAPLLGGVLGGVI) form a helical membrane-spanning segment.

It belongs to the MIP/aquaporin (TC 1.A.8) family. In terms of assembly, homotetramer.

It localises to the cell inner membrane. The enzyme catalyses H2O(in) = H2O(out). In terms of biological role, channel that permits osmotically driven movement of water in both directions. It is involved in the osmoregulation and in the maintenance of cell turgor during volume expansion in rapidly growing cells. It mediates rapid entry or exit of water in response to abrupt changes in osmolarity. This Rhodopseudomonas palustris (strain ATCC BAA-98 / CGA009) protein is Aquaporin Z.